The sequence spans 234 residues: bZIP transcription factor 1 (234 aa).

The interval 67-134 (RAQSDGSNAL…DKQRNAQQQL (68 aa)) is disordered. Over residues 70-86 (SDGSNALLSSIGPSGTT) the composition is skewed to polar residues. The segment covering 88 to 128 (RPRDEMDCFTDTHKHKRGDGNKSRRREQCRANQARYRDKQR) has biased composition (basic and acidic residues). A bZIP domain is found at 106-169 (DGNKSRRREQ…RTNQSPWNTV (64 aa)). The basic motif stretch occupies residues 109 to 128 (KSRRREQCRANQARYRDKQR). Positions 134–155 (LERSVEQLQSELSTLKHRNLDL) are leucine-zipper.

Belongs to the bZIP family. Interacts with PKZ1.

Its subcellular location is the nucleus. Its function is as follows. Required for normal zoospore movement, formation of appressoria by germinated zoospore cysts and plant infection. This is bZIP transcription factor 1 from Phytophthora infestans (Potato late blight agent).